We begin with the raw amino-acid sequence, 278 residues long: Potassium/proton antiporter CemA (278 aa).

Transmembrane regions (helical) follow at residues 60–80, 163–183, 201–221, and 239–259; these read YLVL…SLVF, ILAF…IAVL, FLII…GWEV, and IFLF…YWIF.

Belongs to the CemA family.

The protein resides in the plastid. It is found in the chloroplast inner membrane. The enzyme catalyses K(+)(in) + H(+)(out) = K(+)(out) + H(+)(in). In terms of biological role, contributes to K(+)/H(+) antiport activity by supporting proton efflux to control proton extrusion and homeostasis in chloroplasts in a light-dependent manner to modulate photosynthesis. Prevents excessive induction of non-photochemical quenching (NPQ) under continuous-light conditions. Indirectly promotes efficient inorganic carbon uptake into chloroplasts. This chain is Potassium/proton antiporter CemA, found in Guillardia theta (Cryptophyte).